The chain runs to 364 residues: C3a anaphylatoxin chemotactic receptor (364 aa).

At 1–50 the chain is on the extracellular side; sequence MGDNMDFSEHYGNFSENYVTESYGEFDLYYDPLNETSLSEQGHRSIWVLS. N-linked (GlcNAc...) asparagine glycosylation is found at Asn13 and Asn34. The chain crosses the membrane as a helical span at residues 51-71; sequence IVLCSIACVLGITGNAFVIWI. Residues 72–82 are Cytoplasmic-facing; the sequence is AGVKMKRTVNT. Residues 83–103 traverse the membrane as a helical segment; it reads IWFVNLAAADLLCCVSIPFSI. Residues 104–120 lie on the Extracellular side of the membrane; that stretch reads ADIILNSHWPYGEAMCK. A disulfide bond links Cys119 and Cys198. Residues 121-141 form a helical membrane-spanning segment; the sequence is ILPSMVVLNMFASVFTLVLIS. The Cytoplasmic segment spans residues 142 to 159; it reads LDRFALVILPVWAQNHRS. A helical membrane pass occupies residues 160-180; sequence ITLAWLLCGLVWVLGLLLSLP. At 181–220 the chain is on the extracellular side; it reads SMIYREIVVHDDMNITLCIYNHLQDKTEGNQSAIKAIHVT. Residues 221–241 traverse the membrane as a helical segment; it reads RLILGFLIPLLVIAVCYLLIG. Over 242-256 the chain is Cytoplasmic; that stretch reads RRVSSGRFKSQRAFQ. The helical transmembrane segment at 257–277 threads the bilayer; the sequence is IILVVVTTFFVCWLPYHVIGL. Residues 278–295 lie on the Extracellular side of the membrane; that stretch reads VIEYGKEASQVMARALDP. A helical membrane pass occupies residues 296–316; sequence LAISLAYVNSCLNPVLYVFMG. The Cytoplasmic segment spans residues 317 to 364; that stretch reads QDFKERVRVSLRKIFEKVFSEDVTLRSSVYSKGQSQLSRATNSSEAQV.

This sequence belongs to the G-protein coupled receptor 1 family.

It localises to the cell membrane. In terms of biological role, receptor for the chemotactic and inflammatory peptide anaphylatoxin C3a. This receptor stimulates chemotaxis, granule enzyme release and superoxide anion production. In Oncorhynchus mykiss (Rainbow trout), this protein is C3a anaphylatoxin chemotactic receptor (c3ar1).